The primary structure comprises 85 residues: Small ribosomal subunit protein uS17 (85 aa).

The protein belongs to the universal ribosomal protein uS17 family. As to quaternary structure, part of the 30S ribosomal subunit.

Its function is as follows. One of the primary rRNA binding proteins, it binds specifically to the 5'-end of 16S ribosomal RNA. This Geobacter sp. (strain M21) protein is Small ribosomal subunit protein uS17.